Consider the following 427-residue polypeptide: Glutamate-1-semialdehyde 2,1-aminomutase (427 aa).

Lysine 268 bears the N6-(pyridoxal phosphate)lysine mark.

Belongs to the class-III pyridoxal-phosphate-dependent aminotransferase family. HemL subfamily. It depends on pyridoxal 5'-phosphate as a cofactor.

It is found in the cytoplasm. It carries out the reaction (S)-4-amino-5-oxopentanoate = 5-aminolevulinate. The protein operates within porphyrin-containing compound metabolism; protoporphyrin-IX biosynthesis; 5-aminolevulinate from L-glutamyl-tRNA(Glu): step 2/2. The chain is Glutamate-1-semialdehyde 2,1-aminomutase from Methanococcus maripaludis (strain DSM 14266 / JCM 13030 / NBRC 101832 / S2 / LL).